The following is a 53-amino-acid chain: Light-harvesting protein B800/850/890 beta-1 chain (53 aa).

The Cytoplasmic portion of the chain corresponds to 1 to 19 (ADNMSLTGLSDEEAKEFHS). Residues H18 and H36 each coordinate a bacteriochlorophyll. The helical transmembrane segment at 20–42 (IFMQSFLIFTAVAVVAHFLAWAW) threads the bilayer. The Periplasmic portion of the chain corresponds to 43–53 (RPWIPGAEGYG).

Belongs to the antenna complex beta subunit family. The core complex is formed by different alpha and beta chains, binding bacteriochlorophyll molecules, and arranged most probably in tetrameric structures disposed around the reaction center. The non-pigmented gamma chains may constitute additional components.

The protein localises to the cell inner membrane. Antenna complexes are light-harvesting systems, which transfer the excitation energy to the reaction centers. This chain is Light-harvesting protein B800/850/890 beta-1 chain, found in Halorhodospira halophila (strain DSM 244 / SL1) (Ectothiorhodospira halophila (strain DSM 244 / SL1)).